A 269-amino-acid polypeptide reads, in one-letter code: Shikimate dehydrogenase (NADP(+)) (269 aa).

Residues 17 to 19 (SKS) and threonine 64 contribute to the shikimate site. Lysine 68 (proton acceptor) is an active-site residue. NADP(+) is bound at residue aspartate 80. Positions 89 and 105 each coordinate shikimate. Residues 130–134 (GAGGA), 154–159 (NRTHAK), and methionine 213 contribute to the NADP(+) site. Tyrosine 215 contributes to the shikimate binding site. Glycine 237 provides a ligand contact to NADP(+).

Belongs to the shikimate dehydrogenase family. In terms of assembly, homodimer.

The catalysed reaction is shikimate + NADP(+) = 3-dehydroshikimate + NADPH + H(+). It participates in metabolic intermediate biosynthesis; chorismate biosynthesis; chorismate from D-erythrose 4-phosphate and phosphoenolpyruvate: step 4/7. Its function is as follows. Involved in the biosynthesis of the chorismate, which leads to the biosynthesis of aromatic amino acids. Catalyzes the reversible NADPH linked reduction of 3-dehydroshikimate (DHSA) to yield shikimate (SA). The sequence is that of Shikimate dehydrogenase (NADP(+)) from Neisseria polysaccharea.